The following is an 812-amino-acid chain: Lon protease (812 aa).

The Lon N-terminal domain occupies 12–205 (LPMLPLRGVL…YLCELLAKEM (194 aa)). 357–364 (GPPGVGKT) contacts ATP. A Lon proteolytic domain is found at 593–774 (ENQVGVATGL…DEVLEETLLK (182 aa)). Residues serine 680 and lysine 723 contribute to the active site.

This sequence belongs to the peptidase S16 family. As to quaternary structure, homohexamer. Organized in a ring with a central cavity.

It is found in the cytoplasm. It carries out the reaction Hydrolysis of proteins in presence of ATP.. Its function is as follows. ATP-dependent serine protease that mediates the selective degradation of mutant and abnormal proteins as well as certain short-lived regulatory proteins. Required for cellular homeostasis and for survival from DNA damage and developmental changes induced by stress. Degrades polypeptides processively to yield small peptide fragments that are 5 to 10 amino acids long. Binds to DNA in a double-stranded, site-specific manner. In Syntrophomonas wolfei subsp. wolfei (strain DSM 2245B / Goettingen), this protein is Lon protease.